A 56-amino-acid polypeptide reads, in one-letter code: Large ribosomal subunit protein bL32 (56 aa).

Positions 1–21 (MAVQQNRKTRSRRGMRRSHDA) are disordered. Residues 7 to 16 (RKTRSRRGMR) are compositionally biased toward basic residues.

This sequence belongs to the bacterial ribosomal protein bL32 family.

This is Large ribosomal subunit protein bL32 from Vibrio cholerae serotype O1 (strain ATCC 39541 / Classical Ogawa 395 / O395).